Here is a 197-residue protein sequence, read N- to C-terminus: ATP-dependent Clp protease proteolytic subunit 1 (197 aa).

S96 acts as the Nucleophile in catalysis. The active site involves H121.

Belongs to the peptidase S14 family. Fourteen ClpP subunits assemble into 2 heptameric rings which stack back to back to give a disk-like structure with a central cavity, resembling the structure of eukaryotic proteasomes.

It localises to the cytoplasm. It catalyses the reaction Hydrolysis of proteins to small peptides in the presence of ATP and magnesium. alpha-casein is the usual test substrate. In the absence of ATP, only oligopeptides shorter than five residues are hydrolyzed (such as succinyl-Leu-Tyr-|-NHMec, and Leu-Tyr-Leu-|-Tyr-Trp, in which cleavage of the -Tyr-|-Leu- and -Tyr-|-Trp bonds also occurs).. Functionally, cleaves peptides in various proteins in a process that requires ATP hydrolysis. Has a chymotrypsin-like activity. Plays a major role in the degradation of misfolded proteins. This Synechococcus sp. (strain CC9902) protein is ATP-dependent Clp protease proteolytic subunit 1.